Consider the following 190-residue polypeptide: Threonylcarbamoyl-AMP synthase (190 aa).

One can recognise a YrdC-like domain in the interval 7–190 (IGSIAAAVDL…ALTGELFRQG (184 aa)).

It belongs to the SUA5 family. TsaC subfamily.

It localises to the cytoplasm. It catalyses the reaction L-threonine + hydrogencarbonate + ATP = L-threonylcarbamoyladenylate + diphosphate + H2O. In terms of biological role, required for the formation of a threonylcarbamoyl group on adenosine at position 37 (t(6)A37) in tRNAs that read codons beginning with adenine. Catalyzes the conversion of L-threonine, HCO(3)(-)/CO(2) and ATP to give threonylcarbamoyl-AMP (TC-AMP) as the acyladenylate intermediate, with the release of diphosphate. The polypeptide is Threonylcarbamoyl-AMP synthase (Salmonella typhimurium (strain LT2 / SGSC1412 / ATCC 700720)).